Consider the following 359-residue polypeptide: MAQQLTGEQTLDHYEDSTQASIFTYTNSNSTRGPFEGPNYHIAPRWVYHLTSTWMILVVIASVFTNGLVLAATMRFKKLRHPLNWILVNLAVADLAETIIASTISVVNQIYGYFVLGHPLCVIEGYIVSLCGITGLWSLAIISWERWLVVCKPFGNVRFDAKLATVGIVFSWVWAAVWTAPPIFGWSRYWPYGLKTSCGPDVFSGTSYPGVQSYMMVLMVTCCIFPLSIIVLCYLQVWLAIRAVAKQQKESESTQKAEKEVTRMVVVMVFAYCLCWGPYTFFACFATAHPGYAFHPLVASLPSYFAKSATIYNPIIYVFMNRQFRNCILQLFGKKVDDSSELSSTSKTEVSSVSSVSPA.

Over 1–47 (MAQQLTGEQTLDHYEDSTQASIFTYTNSNSTRGPFEGPNYHIAPRWV) the chain is Extracellular. Residues 12–38 (DHYEDSTQASIFTYTNSNSTRGPFEGP) are required for 11-cis-retinal regeneration. A glycan (N-linked (GlcNAc...) asparagine) is linked at Asn29. A helical transmembrane segment spans residues 48–72 (YHLTSTWMILVVIASVFTNGLVLAA). Over 73–84 (TMRFKKLRHPLN) the chain is Cytoplasmic. A helical transmembrane segment spans residues 85–110 (WILVNLAVADLAETIIASTISVVNQI). Residues 111–124 (YGYFVLGHPLCVIE) are Extracellular-facing. Residues Cys121 and Cys198 are joined by a disulfide bond. The chain crosses the membrane as a helical span at residues 125-144 (GYIVSLCGITGLWSLAIISW). Residues 145–163 (ERWLVVCKPFGNVRFDAKL) lie on the Cytoplasmic side of the membrane. A helical membrane pass occupies residues 164–187 (ATVGIVFSWVWAAVWTAPPIFGWS). At 188-213 (RYWPYGLKTSCGPDVFSGTSYPGVQS) the chain is on the extracellular side. Residues 214 to 241 (YMMVLMVTCCIFPLSIIVLCYLQVWLAI) traverse the membrane as a helical segment. Residues 242–263 (RAVAKQQKESESTQKAEKEVTR) are Cytoplasmic-facing. Residues 264–287 (MVVVMVFAYCLCWGPYTFFACFAT) form a helical membrane-spanning segment. The Extracellular portion of the chain corresponds to 288–295 (AHPGYAFH). The helical transmembrane segment at 296 to 320 (PLVASLPSYFAKSATIYNPIIYVFM) threads the bilayer. Residue Lys307 is modified to N6-(retinylidene)lysine. Topologically, residues 321–359 (NRQFRNCILQLFGKKVDDSSELSSTSKTEVSSVSSVSPA) are cytoplasmic.

Belongs to the G-protein coupled receptor 1 family. Opsin subfamily. As to quaternary structure, monomer. Homodimer. Homotetramer. O-glycosylated. In terms of processing, phosphorylated on some or all of the serine and threonine residues present in the C-terminal region. As to expression, expressed in cone photoreceptor cells.

It localises to the membrane. Visual pigments are the light-absorbing molecules that mediate vision. They consist of an apoprotein, opsin, covalently linked to cis-retinal. May increase spectral sensitivity in dim light. The polypeptide is Medium-wave-sensitive opsin 1 (Opn1mw) (Rattus norvegicus (Rat)).